Consider the following 428-residue polypeptide: 3-phosphoshikimate 1-carboxyvinyltransferase (428 aa).

3-phosphoshikimate-binding residues include K22, S23, and R27. Position 22 (K22) interacts with phosphoenolpyruvate. 2 residues coordinate phosphoenolpyruvate: G96 and R124. S170, S171, Q172, S198, D314, N337, and K341 together coordinate 3-phosphoshikimate. Q172 contacts phosphoenolpyruvate. The active-site Proton acceptor is D314. The phosphoenolpyruvate site is built by R345, R387, and K412.

This sequence belongs to the EPSP synthase family. In terms of assembly, monomer.

Its subcellular location is the cytoplasm. It carries out the reaction 3-phosphoshikimate + phosphoenolpyruvate = 5-O-(1-carboxyvinyl)-3-phosphoshikimate + phosphate. It participates in metabolic intermediate biosynthesis; chorismate biosynthesis; chorismate from D-erythrose 4-phosphate and phosphoenolpyruvate: step 6/7. Its function is as follows. Catalyzes the transfer of the enolpyruvyl moiety of phosphoenolpyruvate (PEP) to the 5-hydroxyl of shikimate-3-phosphate (S3P) to produce enolpyruvyl shikimate-3-phosphate and inorganic phosphate. This Photobacterium profundum (strain SS9) protein is 3-phosphoshikimate 1-carboxyvinyltransferase.